A 130-amino-acid chain; its full sequence is uncharacterized protein (130 aa).

The disordered stretch occupies residues 1–104; that stretch reads MRPGSSPRAP…RGRWGLRGGP (104 aa). A compositionally biased stretch (low complexity) spans 88-97; that stretch reads RRQPGPQRGR.

This is an uncharacterized protein from Homo sapiens (Human).